The sequence spans 270 residues: UPF0354 protein BCAH187_A4826 (270 aa).

It belongs to the UPF0354 family.

The chain is UPF0354 protein BCAH187_A4826 from Bacillus cereus (strain AH187).